Reading from the N-terminus, the 206-residue chain is Platelet glycoprotein Ib beta chain (206 aa).

The first 26 residues, 1-26 (MGSRPRGALSLLLLLLAPPSRPASGC), serve as a signal peptide directing secretion. 2 disulfides stabilise this stretch: C26/C32 and C30/C39. Residues 27–55 (PAPCRCSETRVDCGRRGLTWASLPAAFPP) enclose the LRRNT domain. Over 27–150 (PAPCRCSETR…CAPGLLCWGA (124 aa)) the chain is Extracellular. The stretch at 60–83 (LVLTDNNLTALPPGLLDTLPALRR) is one LRR repeat. An LRRCT domain is found at 89 to 143 (NPWRCDCRLLPLRAWLAGRPEREFYRDLRCVAPLALRGRLLPYVAEDELRAACAP). Disulfide bonds link C93–C118 and C95–C141. Residues 151–171 (LVAQLALLVLGLLHALLLALL) traverse the membrane as a helical segment. Over 172-206 (LSRLRRLRAQARARSTREFSLTAPLVAESAGGGAS) the chain is Cytoplasmic. S186 is subject to Phosphoserine. S191 bears the Phosphoserine; by PKA mark. Residue T193 is modified to Phosphothreonine. The residue at position 200 (S200) is a Phosphoserine.

As to quaternary structure, two GP-Ib beta are disulfide-linked to one GP-Ib alpha. GP-IX is complexed with the GP-Ib heterodimer via a non covalent linkage. Interacts with TRAF4.

The protein resides in the membrane. Functionally, gp-Ib, a surface membrane protein of platelets, participates in the formation of platelet plugs by binding to von Willebrand factor, which is already bound to the subendothelium. This chain is Platelet glycoprotein Ib beta chain (Gp1bb), found in Rattus norvegicus (Rat).